The following is a 253-amino-acid chain: Proteasome subunit alpha type-3 (253 aa).

The interval 230 to 253 (ELTEKARKAGDAANKDEDSDNETH) is disordered. Basic and acidic residues predominate over residues 231–253 (LTEKARKAGDAANKDEDSDNETH). S248 bears the Phosphoserine mark.

This sequence belongs to the peptidase T1A family. As to quaternary structure, the 26S proteasome consists of a 20S proteasome core and two 19S regulatory subunits. The 20S proteasome core is composed of 28 subunits that are arranged in four stacked rings, resulting in a barrel-shaped structure. The two end rings are each formed by seven alpha subunits, and the two central rings are each formed by seven beta subunits. The catalytic chamber with the active sites is on the inside of the barrel. Interacts with ntc.

The protein resides in the cytoplasm. Its subcellular location is the nucleus. Its function is as follows. The proteasome is a multicatalytic proteinase complex which is characterized by its ability to cleave peptides with Arg, Phe, Tyr, Leu, and Glu adjacent to the leaving group at neutral or slightly basic pH. The proteasome has an ATP-dependent proteolytic activity. This Drosophila melanogaster (Fruit fly) protein is Proteasome subunit alpha type-3 (Prosalpha7).